A 149-amino-acid chain; its full sequence is Alpha-crystallin A chain (149 aa).

A sHSP domain is found at 41–149 (LFRSVLESGI…DPTHSERPIP (109 aa)). Residues H89, E91, H96, and H143 each contribute to the Zn(2+) site.

Belongs to the small heat shock protein (HSP20) family. In terms of assembly, heteropolymer composed of three CRYAA and one CRYAB subunits. Inter-subunit bridging via zinc ions enhances stability, which is crucial as there is no protein turn over in the lens. Can also form homodimers and homotetramers (dimers of dimers) which serve as the building blocks of homooligomers. Within homooligomers, the zinc-binding motif is created from residues of 3 different molecules. His-89 and Glu-91 from one molecule are ligands of the zinc ion, and His-96 and His-143 residues from additional molecules complete the site with tetrahedral coordination geometry.

The protein localises to the cytoplasm. Its subcellular location is the nucleus. Functionally, contributes to the transparency and refractive index of the lens. May act as a chaperone, preventing aggregation of various proteins under a wide range of stress conditions. This chain is Alpha-crystallin A chain (CRYAA), found in Anas platyrhynchos (Mallard).